Reading from the N-terminus, the 126-residue chain is Protein LLP homolog (126 aa).

Residues 1–21 show a composition bias toward basic residues; the sequence is MAKSLRSKWRRKMRAEKRKKV. 2 disordered regions span residues 1-22 and 53-126; these read MAKS…KKVA and VPPE…RLAW. Residues 73-94 are compositionally biased toward basic and acidic residues; that stretch reads DGGKMDLDTKRNKKTMLDEHGR. Basic residues predominate over residues 103–126; that stretch reads QAKKLKAKRVGKNGKPKPKKRLAW.

Belongs to the learning-associated protein family.

It is found in the nucleus. It localises to the nucleolus. The protein resides in the chromosome. Its function is as follows. Regulates dendritic and spine growth and synaptic transmission. The protein is Protein LLP homolog (llph) of Danio rerio (Zebrafish).